The following is a 905-amino-acid chain: Patched domain-containing protein 3 (905 aa).

The disordered stretch occupies residues 1–67 (MISSKVAPGE…PVGQEAPPPR (67 aa)). Residues 94–114 (WLFLLGPVLLTASLGTGLIFL) form a helical membrane-spanning segment. N146, N199, N229, and N233 each carry an N-linked (GlcNAc...) asparagine glycan. The next 6 membrane-spanning stretches (helical) occupy residues 337 to 357 (TVIP…VVSC), 369 to 389 (VAVF…GLML), 391 to 411 (IGVP…GVGV), 441 to 461 (VAVS…TGIT), 475 to 495 (GTTL…IMAL), and 558 to 578 (FIVV…CFQV). The SSD domain maps to 338-495 (VIPLFHLAYI…ITCFGAIMAL (158 aa)). Residues N647, N661, and N692 are each glycosylated (N-linked (GlcNAc...) asparagine). 5 helical membrane-spanning segments follow: residues 759–779 (VMIA…HPVC), 781–801 (LWVT…MAFW), 813–833 (LVIC…AFVS), 849–869 (LLGY…CVLA), and 882–902 (IMFL…PVFL).

This sequence belongs to the patched family. Expressed in germ cells of the testis (at protein level).

Its subcellular location is the cell projection. The protein resides in the cilium. It localises to the flagellum membrane. The protein localises to the endoplasmic reticulum membrane. May play a role in sperm development or sperm function. However, does not appear to have an essential role in spermatogenesis or male fertility. The sequence is that of Patched domain-containing protein 3 from Rattus norvegicus (Rat).